Reading from the N-terminus, the 106-residue chain is Cytochrome c oxidase assembly protein COX16 homolog, mitochondrial (106 aa).

At M1–T15 the chain is on the mitochondrial matrix side. The helical transmembrane segment at L16–L33 threads the bilayer. Residues R34–T106 lie on the Mitochondrial intermembrane side of the membrane. The tract at residues I81 to T106 is disordered.

This sequence belongs to the COX16 family. As to quaternary structure, associates with the MITRAC complex. Interacts with MT-CO2/COX; specifically interacts with newly synthesized MT-CO2/COX. Interacts with SCO1, SCO2 and COA6.

It localises to the mitochondrion inner membrane. Functionally, required for the assembly of the mitochondrial respiratory chain complex IV (CIV), also known as cytochrome c oxidase. Promotes the insertion of copper into the active site of cytochrome c oxidase subunit II (MT-CO2/COX2). Interacts specifically with newly synthesized MT-CO2/COX and its copper center-forming metallochaperones SCO1, SCO2 and COA6. Probably facilitates MT-CO2/COX2 association with the MITRAC assembly intermediate containing MT-CO1/COX1, thereby participating in merging the MT-CO1/COX1 and MT-CO2/COX2 assembly lines. This chain is Cytochrome c oxidase assembly protein COX16 homolog, mitochondrial, found in Mus musculus (Mouse).